The following is a 284-amino-acid chain: Acetyl-coenzyme A carboxylase carboxyl transferase subunit beta (284 aa).

The 254-residue stretch at 31 to 284 folds into the CoA carboxyltransferase N-terminal domain; that stretch reads FWTYCKGCDS…LYQILAMHKK (254 aa). Residues Cys-35, Cys-38, Cys-54, and Cys-57 each coordinate Zn(2+). The C4-type zinc finger occupies 35–57; it reads CKGCDSHVFRKDIEENSFVCPKC.

The protein belongs to the AccD/PCCB family. Acetyl-CoA carboxylase is a heterohexamer composed of biotin carboxyl carrier protein (AccB), biotin carboxylase (AccC) and two subunits each of ACCase subunit alpha (AccA) and ACCase subunit beta (AccD). It depends on Zn(2+) as a cofactor.

The protein localises to the cytoplasm. It catalyses the reaction N(6)-carboxybiotinyl-L-lysyl-[protein] + acetyl-CoA = N(6)-biotinyl-L-lysyl-[protein] + malonyl-CoA. It functions in the pathway lipid metabolism; malonyl-CoA biosynthesis; malonyl-CoA from acetyl-CoA: step 1/1. Its function is as follows. Component of the acetyl coenzyme A carboxylase (ACC) complex. Biotin carboxylase (BC) catalyzes the carboxylation of biotin on its carrier protein (BCCP) and then the CO(2) group is transferred by the transcarboxylase to acetyl-CoA to form malonyl-CoA. The protein is Acetyl-coenzyme A carboxylase carboxyl transferase subunit beta of Clostridioides difficile (strain 630) (Peptoclostridium difficile).